A 392-amino-acid chain; its full sequence is Caveolae-associated protein 1 (392 aa).

Residue M1 is modified to N-acetylmethionine. The span at 1-10 shows a compositional bias: basic and acidic residues; it reads MEDVTLHIVE. The tract at residues 1–45 is disordered; that stretch reads MEDVTLHIVERPYSGYPDASSEGPEPTPGEARATEEPSGTGSDEL. The interval 1-100 is required for homotrimerization and for interaction with CAVIN2 and CAVIN3; it reads MEDVTLHIVE…IQGELSKLGK (100 aa). Phosphoserine is present on residues S21 and S38. A Phosphothreonine modification is found at T40. 2 positions are modified to phosphoserine: S42 and S48. Residues 54–64 are nuclear export signal; sequence VLVLSLLDKII. Positions 55–77 are leucine-zipper 1; that stretch reads LVLSLLDKIIGAVDQIQLTQAQL. Residue K118 forms a Glycyl lysine isopeptide (Lys-Gly) (interchain with G-Cter in SUMO2) linkage. S120 carries the phosphoserine modification. A Glycyl lysine isopeptide (Lys-Gly) (interchain with G-Cter in SUMO2) cross-link involves residue K124. Residues 138–154 form a nuclear localization signal region; sequence KKLEVNEAELLRRRNFK. Residue Y158 is modified to Phosphotyrosine. K163 is covalently cross-linked (Glycyl lysine isopeptide (Lys-Gly) (interchain with G-Cter in SUMO1); alternate). K163 participates in a covalent cross-link: Glycyl lysine isopeptide (Lys-Gly) (interchain with G-Cter in SUMO2); alternate. K167 is covalently cross-linked (Glycyl lysine isopeptide (Lys-Gly) (interchain with G-Cter in SUMO2)). Positions 168-188 are leucine-zipper 2; it reads LSVSKSLKESEALPEKEGDEL. Residues S169 and S171 each carry the phosphoserine modification. Residue K172 forms a Glycyl lysine isopeptide (Lys-Gly) (interchain with G-Cter in SUMO2) linkage. S173 and S177 each carry phosphoserine. Over residues 173–183 the composition is skewed to basic and acidic residues; that stretch reads SLKESEALPEK. Residues 173–198 are disordered; it reads SLKESEALPEKEGDELGEGERPEEDA. Acidic residues predominate over residues 184–198; sequence EGDELGEGERPEEDA. A coiled-coil region spans residues 201–284; the sequence is IELSSDEAVE…RMNKLGTRLV (84 aa). Phosphoserine is present on residues S204 and S205. Positions 235-251 are nuclear localization signal; sequence KKAFSKEKMEKTKVRTR. A leucine-zipper 3 region spans residues 259–299; that stretch reads LKTKENLEKTRHTLEKRMNKLGTRLVPVERREKLKTSRDKL. S302 bears the Phosphoserine mark. The residue at position 304 (T304) is a Phosphothreonine. Residue Y310 is modified to Phosphotyrosine. A Glycyl lysine isopeptide (Lys-Gly) (interchain with G-Cter in SUMO2) cross-link involves residue K328. Residues 347-367 form a disordered region; that stretch reads GPDDDEVGAERGAETDLLRGS. Residues 354–363 show a composition bias toward basic and acidic residues; it reads GAERGAETDL. 5 positions are modified to phosphoserine: S367, S368, S381, S389, and S391.

Belongs to the CAVIN family. Component of the CAVIN complex composed of CAVIN1, CAVIN2, CAVIN3 and CAVIN4. Interacts with RNA polymerase I subunit POLR1A/RPA1 and TTF1. Binds the 3' end of pre-rRNA. Interacts with transcription factor ZNF148. Interacts with LIPE in the adipocyte cytoplasm. Interacts with CAV1, CAV3, CAVIN2, CAVIN3 and CAVIN4. In terms of processing, phosphorylated. Present in active and inactive forms. Changes in phosphorylation pattern may alter activity. Phosphorylation at Tyr-158 is essential for its function in the regulation of ribosomal transcriptional activity. Post-translationally, monoubiquitinated. Expressed in the adipocyte (at protein level). Expressed in all striated and smooth muscles tested including diaphragm, esophageal striated muscle, fibroblast, endocardial endothelium, epicardial mesothelium, intestinal smooth muscle, masseter, soleus muscle, vascular smooth muscle and white gastrocnemius muscle (at protein level). Expressed in the endothelium and perineural sheath (at protein level). Not expressed in hepatocytes.

It localises to the membrane. Its subcellular location is the caveola. The protein resides in the cell membrane. It is found in the microsome. The protein localises to the endoplasmic reticulum. It localises to the cytoplasm. Its subcellular location is the cytosol. The protein resides in the mitochondrion. It is found in the nucleus. In terms of biological role, plays an important role in caveolae formation and organization. Essential for the formation of caveolae in all tissues. Core component of the CAVIN complex which is essential for recruitment of the complex to the caveolae in presence of calveolin-1 (CAV1). Essential for normal oligomerization of CAV1. Promotes ribosomal transcriptional activity in response to metabolic challenges in the adipocytes and plays an important role in the formation of the ribosomal transcriptional loop. Dissociates transcription complexes paused by DNA-bound TTF1, thereby releasing both RNA polymerase I and pre-RNA from the template. The caveolae biogenesis pathway is required for the secretion of proteins such as GASK1A. This is Caveolae-associated protein 1 from Rattus norvegicus (Rat).